A 436-amino-acid polypeptide reads, in one-letter code: 3-ketoacyl-CoA thiolase (436 aa).

The Acyl-thioester intermediate role is filled by Cys99. Active-site proton acceptor residues include His392 and Cys422.

Belongs to the thiolase-like superfamily. Thiolase family. In terms of assembly, heterotetramer of two alpha chains (FadJ) and two beta chains (FadI).

It is found in the cytoplasm. It carries out the reaction an acyl-CoA + acetyl-CoA = a 3-oxoacyl-CoA + CoA. The protein operates within lipid metabolism; fatty acid beta-oxidation. Functionally, catalyzes the final step of fatty acid oxidation in which acetyl-CoA is released and the CoA ester of a fatty acid two carbons shorter is formed. The protein is 3-ketoacyl-CoA thiolase of Escherichia coli (strain K12 / MC4100 / BW2952).